The following is a 130-amino-acid chain: Small ribosomal subunit protein uS11c (130 aa).

It belongs to the universal ribosomal protein uS11 family. Part of the 30S ribosomal subunit.

The protein resides in the plastid. Its subcellular location is the chloroplast. The polypeptide is Small ribosomal subunit protein uS11c (Stigeoclonium helveticum (Green alga)).